A 797-amino-acid chain; its full sequence is Protein tamozhennic (797 aa).

The PUB domain maps to 79 to 146; sequence QNAIVAFETI…AAEDTFVLEG (68 aa). Disordered regions lie at residues 515–570 and 638–697; these read AGGI…ISDL and LSIT…SAGV. The segment covering 662 to 679 has biased composition (basic and acidic residues); sequence EKARTLDKKSGTGRREAK. The RanBP2-type zinc finger occupies 735-766; the sequence is IVTSPNEWSCSFCTFLNPDTKRICEMCCRSKD.

In terms of assembly, homomultimer. Binds to dl and msl-1 via their nuclear localization signal (NLS). Also binds to Ran, Ran-like and mbo.

Its subcellular location is the cytoplasm. Has an essential role during oogenesis and embryogenesis, perhaps in modulating the levels of nuclear import of additional proteins. Modulates the nuclear import of dorsal (dl), Dif and male specific lethal 1 (msl-1). Negatively regulates nuclear import of dl and controls the accumulation of dl in the nucleus after immune challenge. This is Protein tamozhennic (tamo) from Drosophila melanogaster (Fruit fly).